Consider the following 223-residue polypeptide: MKLHYVAVLTLAILMFLTWLPESLSCNKALCASDVSKCLIQELCQCRPGEGNCSCCKECMLCLGALWDECCDCVGMCNPRNYSDTPPTSKSTVEELHEPIPSLFRALTEGDTQLNWNIVSFPVAEELSHHENLVSFLETVNQPHHQNVSVPSNNVHAPYSSDKEHMCTVVYFDDCMSIHQCKISCESMGASKYRWFHNACCECIGPECIDYGSKTVKCMNCMF.

The N-terminal stretch at 1–25 is a signal peptide; the sequence is MKLHYVAVLTLAILMFLTWLPESLS. N-linked (GlcNAc...) asparagine glycans are attached at residues Asn52 and Asn81.

The protein belongs to the twisted gastrulation protein family. Interacts with CHRD and BMP4. This interaction enhances CHRD/BMP4 complex formation. Interacts with BMP7.

The protein resides in the secreted. May be involved in dorsoventral axis formation. Seems to antagonize BMP signaling by forming ternary complexes with CHRD and BMPs, thereby preventing BMPs from binding to their receptors. In addition to the anti-BMP function, also has pro-BMP activity, partly mediated by cleavage and degradation of CHRD, which releases BMPs from ternary complexes. May be an important modulator of BMP-regulated cartilage development and chondrocyte differentiation. May play a role in thymocyte development. The protein is Twisted gastrulation protein homolog 1 (TWSG1) of Homo sapiens (Human).